We begin with the raw amino-acid sequence, 513 residues long: Quiannulatic acid synthase (513 aa).

A helical membrane pass occupies residues valine 14 to tyrosine 34. Residue asparagine 308 is glycosylated (N-linked (GlcNAc...) asparagine). Cysteine 477 serves as a coordination point for heme.

It belongs to the cytochrome P450 family. It depends on heme as a cofactor.

It localises to the membrane. It carries out the reaction quiannulatene + 3 reduced [NADPH--hemoprotein reductase] + 3 O2 = quiannulatate + 3 oxidized [NADPH--hemoprotein reductase] + 4 H2O + 4 H(+). Its pathway is secondary metabolite biosynthesis; terpenoid biosynthesis. Cytochrome P450 monooxygenase; part of the gene cluster that mediates the biosynthesis of the pentacyclic sesterterpene quiannulatic acid. The first step of the pathway is performed by the sesterterpene synthase (QS) that possesses both prenyl transferase and terpene cyclase activity, converting isopentenyl diphosphate and dimethylallyl diphosphate into geranylfarnesyl diphosphate (GFPP) and further converting GFPP into quiannulatene via an unprecedented cyclization mode which involves three rounds of hydride shifts and two successive C-C bond migrations to construct the 5-6-5-5-5 fused ring. The cytochrome P450 monooxygenase Qnn-P450 then oxidizes quiannulatene at C-19 in 3 successive reactions to afford quiannulatic acid. The sequence is that of Quiannulatic acid synthase from Emericella variicolor (Aspergillus stellatus).